Reading from the N-terminus, the 247-residue chain is 5'-nucleotidase SurE (247 aa).

Residues aspartate 8, aspartate 9, serine 39, and asparagine 91 each coordinate a divalent metal cation.

The protein belongs to the SurE nucleotidase family. The cofactor is a divalent metal cation.

The protein resides in the cytoplasm. The catalysed reaction is a ribonucleoside 5'-phosphate + H2O = a ribonucleoside + phosphate. Its function is as follows. Nucleotidase that shows phosphatase activity on nucleoside 5'-monophosphates. This is 5'-nucleotidase SurE from Aromatoleum aromaticum (strain DSM 19018 / LMG 30748 / EbN1) (Azoarcus sp. (strain EbN1)).